A 604-amino-acid chain; its full sequence is Microtubule-associated protein 70-4 (604 aa).

Residues 1–33 are disordered; sequence MEERGFMSPSLAISASYREGGSKGMSRRRSMRP. A coiled-coil region spans residues 49 to 351; it reads DPVRIELNRL…ADRAAKSEAQ (303 aa). Residues 233–470 are required for targeting to microtubules; the sequence is IIDKMHRQKV…PLNHKSSEGT (238 aa). Disordered stretches follow at residues 367 to 422 and 434 to 495; these read LKGP…RSLT and GTSR…NDSV. Over residues 371–385 the composition is skewed to low complexity; that stretch reads TSSSSRGTSVGRSSS. Polar residues-rich tracts occupy residues 401–422 and 468–478; these read PKIT…RSLT and EGTSRGESPSS. Positions 521–569 form a coiled coil; the sequence is LRDKDEAIEMLAKKVETLTKAMDVEAKKMRREVAVMGKEVAAMRVVDKG.

It belongs to the MAP70 family.

It localises to the cytoplasm. The protein resides in the cytoskeleton. In terms of biological role, plant-specific protein that interact with microtubules. This Arabidopsis thaliana (Mouse-ear cress) protein is Microtubule-associated protein 70-4 (MAP70.4).